The primary structure comprises 69 residues: Conotoxin Eb6.22 (69 aa).

The N-terminal stretch at 1–17 (VLIIAVLFLTACQLTTA) is a signal peptide. The propeptide occupies 18–41 (ETYSRGRQKHRARRSTDKNSKWTR). Cystine bridges form between Cys-43/Cys-57, Cys-50/Cys-61, and Cys-56/Cys-68.

Belongs to the conotoxin O1 superfamily. Expressed by the venom duct.

Its subcellular location is the secreted. The chain is Conotoxin Eb6.22 (E1) from Conus ebraeus (Hebrew cone).